The sequence spans 380 residues: Queuine tRNA-ribosyltransferase (380 aa).

The active-site Proton acceptor is the Asp93. Substrate is bound by residues 93–97 (DSGGF), Asp147, Gln198, and Gly225. The interval 256-262 (GVGLPSN) is RNA binding. Asp275 (nucleophile) is an active-site residue. Residues 280-284 (ARNGR) form an RNA binding; important for wobble base 34 recognition region. Residues Cys313, Cys315, Cys318, and His344 each contribute to the Zn(2+) site.

It belongs to the queuine tRNA-ribosyltransferase family. As to quaternary structure, homodimer. Within each dimer, one monomer is responsible for RNA recognition and catalysis, while the other monomer binds to the replacement base PreQ1. Requires Zn(2+) as cofactor.

It catalyses the reaction 7-aminomethyl-7-carbaguanine + guanosine(34) in tRNA = 7-aminomethyl-7-carbaguanosine(34) in tRNA + guanine. It functions in the pathway tRNA modification; tRNA-queuosine biosynthesis. Catalyzes the base-exchange of a guanine (G) residue with the queuine precursor 7-aminomethyl-7-deazaguanine (PreQ1) at position 34 (anticodon wobble position) in tRNAs with GU(N) anticodons (tRNA-Asp, -Asn, -His and -Tyr). Catalysis occurs through a double-displacement mechanism. The nucleophile active site attacks the C1' of nucleotide 34 to detach the guanine base from the RNA, forming a covalent enzyme-RNA intermediate. The proton acceptor active site deprotonates the incoming PreQ1, allowing a nucleophilic attack on the C1' of the ribose to form the product. After dissociation, two additional enzymatic reactions on the tRNA convert PreQ1 to queuine (Q), resulting in the hypermodified nucleoside queuosine (7-(((4,5-cis-dihydroxy-2-cyclopenten-1-yl)amino)methyl)-7-deazaguanosine). In Clostridium perfringens (strain 13 / Type A), this protein is Queuine tRNA-ribosyltransferase.